Consider the following 525-residue polypeptide: Zwittermicin A synthase ZmaJ (525 aa).

This sequence belongs to the ATP-dependent AMP-binding enzyme family.

The catalysed reaction is holo-[peptidyl-carrier protein] + L-serine + ATP = L-seryl-[peptidyl-carrier protein] + AMP + diphosphate. It participates in antibiotic biosynthesis. Functionally, involved in the biosynthesis of the linear aminopolyol antibiotic zwittermicin A (ZmA). Specifically adenylates L-serine and loads it onto the holo form of ZmaH via a thioester linkage to the phosphopanthetheine moiety. This chain is Zwittermicin A synthase ZmaJ, found in Bacillus cereus.